A 555-amino-acid chain; its full sequence is MKIIILSVILAYCVTDNCQDACPVEAEPPSSTPTVPTSCEAKEGECIDTRCATCKRDILSDGLCENKPGKTCCRMCQYVIECRVEAAGYFRTFYGKRFNFQEPGKYVLARGTKGGDWSVTLTMENLDGQKGAVLTKTTLEVAGDVIDITQATADPITVNGGADPVIANPFTIGEVTIAVVEIPGFNITVIEFFKLIVIDILGGRSVRIAPDTANKGLISGICGNLEMNDADDFTTDADQLAIQPNINKEFDGCPFYGNPSDIEYCKGLMEPYRAVCRNNINFYYYTLSCAFAYCMGGEERAKHVLFDYVETCAAPETRGTCVLSGHTFYDTFDKARYQFQGPCKEILMAADCYWNTWDVKVSHRDVESYTEVEKVTIRKQSTVVDLIVDGKQVKVGGVDVSIPYSSENTSIYWQDGDILTTAILPEALVVKFNFKQLLVVHIRDPFDGKTCGICGNYNQDSTDDFFDAEGACALTPNPPGCTEEQKPEAERLCNNLFDSSIDEKCNVCYKPDRIARCMYEYCLRGQQGFCDHAWEFKKECYIKHGDTLEVPPECQ.

The signal sequence occupies residues 1 to 11 (MKIIILSVILA). 2 VWFD domains span residues 80-266 (IECR…EYCK) and 319-494 (GTCV…RLCN). 4 cysteine pairs are disulfide-bonded: C82-C222, C321-C454, C343-C493, and C352-C451. N-linked (GlcNAc...) asparagine glycosylation is found at N186 and N408.

Post-translationally, the cysteine residues presumably exist in intramolecular disulfide bridges. The N-terminus is blocked.

It carries out the reaction Cypridina luciferin + O2 = oxidized Cypridina luciferin + hnu + CO2. The chain is Luciferin 2-monooxygenase from Vargula hilgendorfii (Sea firefly).